The following is a 241-amino-acid chain: RecQ-mediated genome instability protein 1 (241 aa).

It belongs to the RMI1 family. In terms of assembly, forms a complex with SGS1 and TOP3.

The protein localises to the cytoplasm. The protein resides in the nucleus. Its function is as follows. Structure-specific DNA-binding protein with a preference for cruciform structures. Also binds single-stranded DNA (ssDNA). Functions together with SGS1 and TOP3 to maintain genome integrity. Essential for proper meiotic cell division. Required for normal S-phase progression and DNA damage response. Required for resistance to the DNA-damaging agent methyl methanesulfonate (MMS). This is RecQ-mediated genome instability protein 1 from Saccharomyces cerevisiae (strain ATCC 204508 / S288c) (Baker's yeast).